The sequence spans 118 residues: Large ribosomal subunit protein bL19 (118 aa).

It belongs to the bacterial ribosomal protein bL19 family.

Functionally, this protein is located at the 30S-50S ribosomal subunit interface and may play a role in the structure and function of the aminoacyl-tRNA binding site. The sequence is that of Large ribosomal subunit protein bL19 from Onion yellows phytoplasma (strain OY-M).